A 375-amino-acid polypeptide reads, in one-letter code: Succinyl-diaminopimelate desuccinylase (375 aa).

Residue histidine 66 participates in Zn(2+) binding. Residue aspartate 68 is part of the active site. Residue aspartate 99 participates in Zn(2+) binding. Glutamate 133 serves as the catalytic Proton acceptor. Zn(2+)-binding residues include glutamate 134, glutamate 162, and histidine 348.

The protein belongs to the peptidase M20A family. DapE subfamily. As to quaternary structure, homodimer. The cofactor is Zn(2+). It depends on Co(2+) as a cofactor.

It carries out the reaction N-succinyl-(2S,6S)-2,6-diaminopimelate + H2O = (2S,6S)-2,6-diaminopimelate + succinate. It participates in amino-acid biosynthesis; L-lysine biosynthesis via DAP pathway; LL-2,6-diaminopimelate from (S)-tetrahydrodipicolinate (succinylase route): step 3/3. Its function is as follows. Catalyzes the hydrolysis of N-succinyl-L,L-diaminopimelic acid (SDAP), forming succinate and LL-2,6-diaminopimelate (DAP), an intermediate involved in the bacterial biosynthesis of lysine and meso-diaminopimelic acid, an essential component of bacterial cell walls. This Janthinobacterium sp. (strain Marseille) (Minibacterium massiliensis) protein is Succinyl-diaminopimelate desuccinylase.